The sequence spans 621 residues: MADSPWDEIREKFQTALALSRVELHKNPEKEPYKSKYSARALLEEVKALLGPAPEDEDERPQADDSLGAGEHALGLPAELVEAEGPVAQGAVRRAVIEFHLGVNHIDTEELSAGEEHLVKCLRLLRKYRLSHDCVSLYIQAQNNLGILWSEREEIETAQAYLESSEALYNQYMKEIGSPPLDPTEHFLPEEEKLPEQERSKRFEKVYTHNLYYLAQVYQHMEMFEKAAHYCHSTLKRQLEHNAYHPMEWAINAATLSQFYINKQCFMEARHCLSAANVIFGQIGKIRTTEDTTEAEGDVPELYHQRKGEIARCWIKYCLTLMQNAQLSMQDNIGELDLDKQSELRALRKKELDEEESVRKKAVQFGTGELCDAISAVEEKVSYLRPLDFEEARELFLTGQHYVFEAKEFFQIDGYVTDHIEVVQDHSALFKVLAFFETDMERRCKMHKRRIAMLEPLIVDLNPQYYLLVNRQIQFEIAHAYYDMMDLKVAIADKLRDPDSHIVKKINNLNKSALKYYQLFLDSLRDPNKVFPEHIGEDVLRPAMLAKFRVARLYGKIITADPKKELENLATSLEHYKFIVDYCEKHPEAAQEIEVELELSKEMVSLLPTKMERFRTKMALT.

Position 178 is a phosphoserine (Ser178).

The protein belongs to the KIF-binding protein family. As to quaternary structure, interacts with KIF1B; positively regulates KIF1B microtubule motor activity. Interacts with STMN2.

The protein resides in the cytoplasm. Its subcellular location is the cytoskeleton. Its function is as follows. Activator of KIF1B plus-end-directed microtubule motor activity. Required for organization of axonal microtubules, and axonal outgrowth and maintenance during peripheral and central nervous system development. This Bos taurus (Bovine) protein is KIF-binding protein (KIFBP).